Consider the following 285-residue polypeptide: Small ribosomal subunit protein uS2 (285 aa).

A disordered region spans residues 262–285 (NDDWNEDDTAPAAPGAASWGGAAF). Over residues 271-285 (APAAPGAASWGGAAF) the composition is skewed to low complexity.

The protein belongs to the universal ribosomal protein uS2 family. Component of the small ribosomal subunit. Mature ribosomes consist of a small (40S) and a large (60S) subunit. The 40S subunit contains about 33 different proteins and 1 molecule of RNA (18S). The 60S subunit contains about 49 different proteins and 3 molecules of RNA (28S, 5.8S and 5S). Interacts with ribosomal protein S21.

It localises to the cytoplasm. Its function is as follows. Required for the assembly and/or stability of the 40S ribosomal subunit. Required for the processing of the 20S rRNA-precursor to mature 18S rRNA in a late step of the maturation of 40S ribosomal subunits. The chain is Small ribosomal subunit protein uS2 from Anopheles gambiae (African malaria mosquito).